The chain runs to 178 residues: Large ribosomal subunit protein uL6 (178 aa).

It belongs to the universal ribosomal protein uL6 family. As to quaternary structure, part of the 50S ribosomal subunit.

Its function is as follows. This protein binds to the 23S rRNA, and is important in its secondary structure. It is located near the subunit interface in the base of the L7/L12 stalk, and near the tRNA binding site of the peptidyltransferase center. In Symbiobacterium thermophilum (strain DSM 24528 / JCM 14929 / IAM 14863 / T), this protein is Large ribosomal subunit protein uL6.